Here is a 1188-residue protein sequence, read N- to C-terminus: Integrin alpha-11 (1188 aa).

A signal peptide spans 1-22 (MDFPRGLLVAWTLSLWPGFTDT). The Extracellular segment spans residues 23–1141 (FNMDTRNPRV…ISKQEDWQVP (1119 aa)). 2 FG-GAP repeats span residues 24-85 (NMDT…NCTK) and 91-151 (VTLS…FSKT). Cysteines 76 and 83 form a disulfide. 2 N-linked (GlcNAc...) asparagine glycosylation sites follow: Asn-82 and Asn-95. 2 cysteine pairs are disulfide-bonded: Cys-121-Cys-139 and Cys-129-Cys-159. Residues 164–345 (DIVIVLDGSN…AALKDIVDAL (182 aa)) form the VWFA domain. Asn-291, Asn-331, Asn-358, Asn-449, and Asn-462 each carry an N-linked (GlcNAc...) asparagine glycan. 5 FG-GAP repeats span residues 355-406 (TNKN…VIPH), 411-461 (LKEF…SMHN), 462-527 (NRSL…RFVY), 528-586 (NGTL…NILK), and 590-650 (QRIT…FEPS). The Ca(2+) site is built by Asp-488, Asn-490, Asp-492, and Asp-496. Asn-528 carries N-linked (GlcNAc...) asparagine glycosylation. The Ca(2+) site is built by Asp-551, Asn-553, Asp-555, Asp-559, Asp-613, Asn-615, Asp-617, and Asp-621. Asn-642 carries an N-linked (GlcNAc...) asparagine glycan. Intrachain disulfides connect Cys-659–Cys-668, Cys-674–Cys-729, and Cys-781–Cys-787. A glycan (N-linked (GlcNAc...) asparagine) is linked at Asn-694. The N-linked (GlcNAc...) asparagine glycan is linked to Asn-857. A disulfide bridge links Cys-881 with Cys-893. Residues Asn-894, Asn-973, Asn-1031, Asn-1039, and Asn-1059 are each glycosylated (N-linked (GlcNAc...) asparagine). A helical transmembrane segment spans residues 1142–1164 (IWIIVGSTLGGLLLLALLVLALW). Topologically, residues 1165-1188 (KLGFFKSAKRKREPGLGPIPKELK) are cytoplasmic.

It belongs to the integrin alpha chain family. Heterodimer of an alpha and a beta subunit. Alpha-11 associates with beta-1. Interacts with RAB21.

It is found in the membrane. In terms of biological role, integrin alpha-11/beta-1 is a receptor for collagen. The protein is Integrin alpha-11 (Itga11) of Mus musculus (Mouse).